The chain runs to 259 residues: GTP cyclohydrolase FolE2 (259 aa).

This sequence belongs to the GTP cyclohydrolase IV family.

The enzyme catalyses GTP + H2O = 7,8-dihydroneopterin 3'-triphosphate + formate + H(+). It participates in cofactor biosynthesis; 7,8-dihydroneopterin triphosphate biosynthesis; 7,8-dihydroneopterin triphosphate from GTP: step 1/1. Functionally, converts GTP to 7,8-dihydroneopterin triphosphate. The protein is GTP cyclohydrolase FolE2 of Halorhodospira halophila (strain DSM 244 / SL1) (Ectothiorhodospira halophila (strain DSM 244 / SL1)).